The following is a 79-amino-acid chain: uncharacterized protein (79 aa).

This is an uncharacterized protein from Ovis aries (Sheep).